The following is a 583-amino-acid chain: Phosphoglucomutase, cytoplasmic 2 (583 aa).

Alpha-D-glucose 1,6-bisphosphate contacts are provided by Arg-25 and Ser-124. Ser-124 (phosphoserine intermediate) is an active-site residue. Mg(2+)-binding residues include Ser-124, Asp-300, Asp-302, and Asp-304. Ser-124 carries the phosphoserine modification. Asp-304, Arg-305, Thr-368, Glu-387, Ser-389, and Lys-400 together coordinate alpha-D-glucose 1,6-bisphosphate.

This sequence belongs to the phosphohexose mutase family. In terms of assembly, monomer. The cofactor is Mg(2+).

Its subcellular location is the cytoplasm. The enzyme catalyses alpha-D-glucose 1-phosphate = alpha-D-glucose 6-phosphate. The catalysed reaction is O-phospho-L-seryl-[protein] + alpha-D-glucose 1-phosphate = alpha-D-glucose 1,6-bisphosphate + L-seryl-[protein]. It carries out the reaction alpha-D-glucose 1,6-bisphosphate + L-seryl-[protein] = O-phospho-L-seryl-[protein] + alpha-D-glucose 6-phosphate. Its function is as follows. Catalyzes the reversible isomerization of alpha-D-glucose 1-phosphate to alpha-D-glucose 6-phosphate. The mechanism proceeds via the intermediate compound alpha-D-glucose 1,6-bisphosphate. This enzyme participates in both the breakdown and synthesis of glucose. This is Phosphoglucomutase, cytoplasmic 2 from Zea mays (Maize).